The sequence spans 106 residues: Large ribosomal subunit protein eL42 (106 aa).

Residues 36 to 56 form a disordered region; it reads FAQGKRRYDRKQSGYGGQTKP.

It belongs to the eukaryotic ribosomal protein eL42 family.

This chain is Large ribosomal subunit protein eL42 (RPL44), found in Phaffia rhodozyma (Yeast).